Reading from the N-terminus, the 354-residue chain is Protein-glutamate methylesterase/protein-glutamine glutaminase (354 aa).

Residues 7–124 (KVLCVDDSAL…REGMLEYTEM (118 aa)) form the Response regulatory domain. Asp58 carries the 4-aspartylphosphate modification. The 193-residue stretch at 156–348 (LLSSEKVIII…AALMKRAEAS (193 aa)) folds into the CheB-type methylesterase domain. Active-site residues include Ser168, His194, and Asp290.

It belongs to the CheB family. Post-translationally, phosphorylated by CheA. Phosphorylation of the N-terminal regulatory domain activates the methylesterase activity.

The protein resides in the cytoplasm. It catalyses the reaction [protein]-L-glutamate 5-O-methyl ester + H2O = L-glutamyl-[protein] + methanol + H(+). The catalysed reaction is L-glutaminyl-[protein] + H2O = L-glutamyl-[protein] + NH4(+). In terms of biological role, involved in chemotaxis. Part of a chemotaxis signal transduction system that modulates chemotaxis in response to various stimuli. Catalyzes the demethylation of specific methylglutamate residues introduced into the chemoreceptors (methyl-accepting chemotaxis proteins or MCP) by CheR. Also mediates the irreversible deamidation of specific glutamine residues to glutamic acid. This is Protein-glutamate methylesterase/protein-glutamine glutaminase from Chromohalobacter salexigens (strain ATCC BAA-138 / DSM 3043 / CIP 106854 / NCIMB 13768 / 1H11).